We begin with the raw amino-acid sequence, 214 residues long: Large ribosomal subunit protein uL16 (214 aa).

At arginine 32 the chain carries Citrulline. Lysine 175 is covalently cross-linked (Glycyl lysine isopeptide (Lys-Gly) (interchain with G-Cter in SUMO2)). Lysine 188 participates in a covalent cross-link: Glycyl lysine isopeptide (Lys-Gly) (interchain with G-Cter in ubiquitin).

It belongs to the universal ribosomal protein uL16 family. In terms of assembly, component of the large ribosomal subunit. Mature ribosomes consist of a small (40S) and a large (60S) subunit. The 40S subunit contains about 33 different proteins and 1 molecule of RNA (18S). The 60S subunit contains about 49 different proteins and 3 molecules of RNA (28S, 5.8S and 5S). Citrullinated by PADI4. Post-translationally, ufmylated by UFL1.

It localises to the cytoplasm. Functionally, component of the large ribosomal subunit. Plays a role in the formation of actively translating ribosomes. May play a role in the embryonic brain development. The chain is Large ribosomal subunit protein uL16 (RPL10) from Oryctolagus cuniculus (Rabbit).